The chain runs to 82 residues: Small ribosomal subunit protein bS16 (82 aa).

The protein belongs to the bacterial ribosomal protein bS16 family.

The protein is Small ribosomal subunit protein bS16 of Rippkaea orientalis (strain PCC 8801 / RF-1) (Cyanothece sp. (strain PCC 8801)).